The following is a 614-amino-acid chain: Nuclear receptor subfamily 1 group D member 1 (614 aa).

Over residues 1-48 (MTTLDSNNNTGGVITYIGSSGSSPNRTSPESLYSDSSNGSFQSLTQGC) the composition is skewed to polar residues. The segment at 1 to 70 (MTTLDSNNNT…TQDPARSFGS (70 aa)) is required for phosphorylation by CSNK1E and cytoplasmic localization. The interval 1-120 (MTTLDSNNNT…GNRVSPSKST (120 aa)) is disordered. The modulating stretch occupies residues 1–129 (MTTLDSNNNT…TSNITKLNGM (129 aa)). Residues 49–285 (PTYFPPSPTG…PPRSPSPEPT (237 aa)) form a crucial for activation of GJA1 region. 2 positions are modified to phosphoserine; by GSK3-beta: S55 and S59. Low complexity predominate over residues 69-103 (GSIPPSLGDDGSPSSSSSSSSSSSSSFYNGSPPGG). Positions 130–206 (VLLCKVCGDV…VGMSRDAVRF (77 aa)) form a DNA-binding region, nuclear receptor. 2 consecutive NR C4-type zinc fingers follow at residues 133–153 (CKVCGDVASGFHYGVHACEGC) and 170–194 (CLKNENCSIVRINRNRCQQCRFKKC). Residues K192 and K193 each carry the N6-acetyllysine; by KAT5 modification. The interval 233–286 (SSQCPLETPPTQHPTPGPMGPSPPPAPAPSPLVGFSQFPQQLTPPRSPSPEPTV) is disordered. The segment covering 239–262 (ETPPTQHPTPGPMGPSPPPAPAPS) has biased composition (pro residues). Phosphothreonine; by CDK1 is present on T275. Residues 285–614 (TVEDVISQVA…KLLSFRVDAQ (330 aa)) enclose the NR LBD domain. C418 contributes to the heme binding site. K591 carries the N6-acetyllysine modification. Position 602 (H602) interacts with heme.

Belongs to the nuclear hormone receptor family. NR1 subfamily. In terms of assembly, binds DNA as a monomer or a homodimer. Interacts with C1D, NR2E3, SP1 and ZNHIT1. Interacts with OPHN1 (via C-terminus). Interacts with PER2; the interaction associates PER2 to BMAL1 promoter region. Interacts with CRY1. Interacts with CCAR2. Interacts with SIAH2. Interacts with FBXW7 and CDK1. Interacts with HUWE1. Interacts with NR0B2. Interacts with NFIL3. Interacts (via domain NR LBD) with HSP90AA1 and HSP90AB1. Post-translationally, ubiquitinated, leading to its proteasomal degradation. Ubiquitinated by the SCF(FBXW7) complex when phosphorylated by CDK1 leading to its proteasomal degradation. Ubiquitinated by SIAH2; leading to its proteasomal degradation. Rapidly ubiquitinated in response to inflammatory triggers and sumoylation is a prerequisite to its ubiquitination. Sumoylated by UBE2I, desumoylated by SENP1, and sumoylation is a prerequisite to its ubiquitination. In terms of processing, phosphorylated by CSNK1E; phosphorylation enhances its cytoplasmic localization. Post-translationally, undergoes lysosome-mediated degradation in a time-dependent manner in the liver. As to expression, expressed in all tissues and cell lines examined. Expressed at high levels in some squamous carcinoma cell lines.

The protein localises to the nucleus. It localises to the cytoplasm. Its subcellular location is the cell projection. The protein resides in the dendrite. It is found in the dendritic spine. In terms of biological role, transcriptional repressor which coordinates circadian rhythm and metabolic pathways in a heme-dependent manner. Integral component of the complex transcription machinery that governs circadian rhythmicity and forms a critical negative limb of the circadian clock by directly repressing the expression of core clock components BMAL1, CLOCK and CRY1. Also regulates genes involved in metabolic functions, including lipid and bile acid metabolism, adipogenesis, gluconeogenesis and the macrophage inflammatory response. Acts as a receptor for heme which stimulates its interaction with the NCOR1/HDAC3 corepressor complex, enhancing transcriptional repression. Recognizes two classes of DNA response elements within the promoter of its target genes and can bind to DNA as either monomers or homodimers, depending on the nature of the response element. Binds as a monomer to a response element composed of the consensus half-site motif 5'-[A/G]GGTCA-3' preceded by an A/T-rich 5' sequence (RevRE), or as a homodimer to a direct repeat of the core motif spaced by two nucleotides (RevDR-2). Acts as a potent competitive repressor of ROR alpha (RORA) function and regulates the levels of its ligand heme by repressing the expression of PPARGC1A, a potent inducer of heme synthesis. Regulates lipid metabolism by repressing the expression of APOC3 and by influencing the activity of sterol response element binding proteins (SREBPs); represses INSIG2 which interferes with the proteolytic activation of SREBPs which in turn govern the rhythmic expression of enzymes with key functions in sterol and fatty acid synthesis. Regulates gluconeogenesis via repression of G6PC1 and PEPCK and adipocyte differentiation via repression of PPARG. Regulates glucagon release in pancreatic alpha-cells via the AMPK-NAMPT-SIRT1 pathway and the proliferation, glucose-induced insulin secretion and expression of key lipogenic genes in pancreatic-beta cells. Positively regulates bile acid synthesis by increasing hepatic expression of CYP7A1 via repression of NR0B2 and NFIL3 which are negative regulators of CYP7A1. Modulates skeletal muscle oxidative capacity by regulating mitochondrial biogenesis and autophagy; controls mitochondrial biogenesis and respiration by interfering with the STK11-PRKAA1/2-SIRT1-PPARGC1A signaling pathway. Represses the expression of SERPINE1/PAI1, an important modulator of cardiovascular disease and the expression of inflammatory cytokines and chemokines in macrophages. Represses gene expression at a distance in macrophages by inhibiting the transcription of enhancer-derived RNAs (eRNAs). Plays a role in the circadian regulation of body temperature and negatively regulates thermogenic transcriptional programs in brown adipose tissue (BAT); imposes a circadian oscillation in BAT activity, increasing body temperature when awake and depressing thermogenesis during sleep. In concert with NR2E3, regulates transcriptional networks critical for photoreceptor development and function. In addition to its activity as a repressor, can also act as a transcriptional activator. In the ovarian granulosa cells acts as a transcriptional activator of STAR which plays a role in steroid biosynthesis. In collaboration with SP1, activates GJA1 transcription in a heme-independent manner. Represses the transcription of CYP2B10, CYP4A10 and CYP4A14. Represses the transcription of CES2. Represses and regulates the circadian expression of TSHB in a NCOR1-dependent manner. Negatively regulates the protein stability of NR3C1 and influences the time-dependent subcellular distribution of NR3C1, thereby affecting its transcriptional regulatory activity. Plays a critical role in the circadian control of neutrophilic inflammation in the lung; under resting, non-stress conditions, acts as a rhythmic repressor to limit inflammatory activity whereas in the presence of inflammatory triggers undergoes ubiquitin-mediated degradation thereby relieving inhibition of the inflammatory response. Plays a key role in the circadian regulation of microglial activation and neuroinflammation; suppresses microglial activation through the NF-kappaB pathway in the central nervous system. Plays a role in the regulation of the diurnal rhythms of lipid and protein metabolism in the skeletal muscle via transcriptional repression of genes controlling lipid and amino acid metabolism in the muscle. The protein is Nuclear receptor subfamily 1 group D member 1 (NR1D1) of Ovis aries (Sheep).